A 522-amino-acid polypeptide reads, in one-letter code: Circadian clock oscillator protein KaiC (522 aa).

2 consecutive KaiC domains span residues 1–248 and 262–522; these read MKKS…INIF and ARVS…DDLL. ATP is bound by residues Gly50, Thr51, Gly52, Lys53, Thr54, Ser90, Lys225, Leu226, Arg227, Thr229, His231, Thr241, Asp242, Thr291, Gly292, Thr293, Gly294, Lys295, Thr296, and Leu297. A Mg(2+)-binding site is contributed by Thr54. Thr296 lines the Mg(2+) pocket. A Mg(2+)-binding site is contributed by Glu319. Trp332 is a binding site for ATP. A Phosphoserine; by autocatalysis modification is found at Ser432. Phosphothreonine; by autocatalysis is present on Thr433. 7 residues coordinate ATP: Arg452, Lys458, Met459, Arg460, Ser462, His464, and Lys466.

Belongs to the KaiC family. As to quaternary structure, homohexamer; hexamerization is dependent on ATP-binding. The KaiABC complex composition changes during the circadian cycle to control KaiC phosphorylation. Complexes KaiC(6), KaiA(2-4):KaiC(6), KaiB(6):KaiC(6) and KaiC(6):KaiB(6):KaiA(12) are among the most important forms, many form cooperatively. KaiC interacts with SasA, activating its autokinase function and leading to RpaA activation. Mg(2+) is required as a cofactor. Post-translationally, phosphorylated on serine and threonine residues by autocatalysis. Has a 4 step phosphorylation cycle; the autokinase acts first on Thr-433, then Ser-432. When Ser-432 is modified KaiC switches to an autophosphatase mode, acting first on phospho-Thr-433 then phospho-Ser-432.

The catalysed reaction is L-seryl-[protein] + ATP = O-phospho-L-seryl-[protein] + ADP + H(+). It catalyses the reaction L-threonyl-[protein] + ATP = O-phospho-L-threonyl-[protein] + ADP + H(+). It carries out the reaction ATP + H2O = ADP + phosphate + H(+). The interaction with KaiA enhances its phosphorylation status, while the interaction with KaiB decreases it. Central component of the KaiABC oscillator complex, which constitutes the main circadian regulator in cyanobacteria. Complex composition changes during the circadian cycle to control KaiC phosphorylation. KaiA stimulates KaiC autophosphorylation, while KaiB sequesters KaiA, leading to KaiC autodephosphorylation. Clock output pathways impact the RpaA transcriptional regulator. KaiC enhances the autophosphorylation activity of SasA, which then transfers its phosphate group to RpaA to activate it. KaiB and KaiC together enhance the phospho-RpaA dephosphatase activity of CikA. In terms of biological role, has a weak, temperature-independent ATPase activity; ATPase activity defines the circadian period. The phosphorylation state of KaiC modulates its ATPase activity and effects KaiB binding. The polypeptide is Circadian clock oscillator protein KaiC (Acaryochloris marina (strain MBIC 11017)).